Here is a 207-residue protein sequence, read N- to C-terminus: Large ribosomal subunit protein uL4 (207 aa).

Residues 49–78 (HAVKNRSAVSGGGRKPWRQKGTGRARQGSI) form a disordered region.

The protein belongs to the universal ribosomal protein uL4 family. In terms of assembly, part of the 50S ribosomal subunit.

Its function is as follows. One of the primary rRNA binding proteins, this protein initially binds near the 5'-end of the 23S rRNA. It is important during the early stages of 50S assembly. It makes multiple contacts with different domains of the 23S rRNA in the assembled 50S subunit and ribosome. Forms part of the polypeptide exit tunnel. The protein is Large ribosomal subunit protein uL4 of Streptococcus uberis (strain ATCC BAA-854 / 0140J).